Consider the following 489-residue polypeptide: UDP-N-acetylmuramoyl-L-alanyl-D-glutamate--2,6-diaminopimelate ligase (489 aa).

Position 32 (Ser32) interacts with UDP-N-acetyl-alpha-D-muramoyl-L-alanyl-D-glutamate. 113–119 (GTNGKTT) is a binding site for ATP. Residues 154–155 (TT), Ser181, Gln187, and Arg189 contribute to the UDP-N-acetyl-alpha-D-muramoyl-L-alanyl-D-glutamate site. At Lys221 the chain carries N6-carboxylysine. Residues Arg381, 405–408 (DNPR), Gly456, and Glu460 each bind meso-2,6-diaminopimelate. A Meso-diaminopimelate recognition motif motif is present at residues 405–408 (DNPR).

It belongs to the MurCDEF family. MurE subfamily. Mg(2+) is required as a cofactor. Post-translationally, carboxylation is probably crucial for Mg(2+) binding and, consequently, for the gamma-phosphate positioning of ATP.

The protein localises to the cytoplasm. The enzyme catalyses UDP-N-acetyl-alpha-D-muramoyl-L-alanyl-D-glutamate + meso-2,6-diaminopimelate + ATP = UDP-N-acetyl-alpha-D-muramoyl-L-alanyl-gamma-D-glutamyl-meso-2,6-diaminopimelate + ADP + phosphate + H(+). Its pathway is cell wall biogenesis; peptidoglycan biosynthesis. Functionally, catalyzes the addition of meso-diaminopimelic acid to the nucleotide precursor UDP-N-acetylmuramoyl-L-alanyl-D-glutamate (UMAG) in the biosynthesis of bacterial cell-wall peptidoglycan. The sequence is that of UDP-N-acetylmuramoyl-L-alanyl-D-glutamate--2,6-diaminopimelate ligase from Gloeobacter violaceus (strain ATCC 29082 / PCC 7421).